The following is a 1790-amino-acid chain: Non-reducing polyketide synthase gsfA (1790 aa).

Residues 20–263 (GDQRTLFRKL…AMRKIQGMWH (244 aa)) form an N-terminal acylcarrier protein transacylase domain (SAT) region. The Ketosynthase family 3 (KS3) domain maps to 392–822 (SSKIAVVGMS…GGNTAMIIEE (431 aa)). Active-site for beta-ketoacyl synthase activity residues include Cys563, His698, and His741. Positions 922-1223 (FAFAGQGTFY…CSTLHRDSDN (302 aa)) are malonyl-CoA:ACP transacylase (MAT) domain. The segment at 1298-1615 (TSSIHRLYSE…PRIMLNRFFQ (318 aa)) is product template (PT) domain. An N-terminal hotdog fold region spans residues 1302–1435 (HRLYSENYDS…AYYEDPSTWL (134 aa)). Residues 1302–1611 (HRLYSENYDS…FRQWPRIMLN (310 aa)) form the PKS/mFAS DH domain. The active-site Proton acceptor; for dehydratase activity is His1334. The interval 1460 to 1611 (MANKLTTSLA…FRQWPRIMLN (152 aa)) is C-terminal hotdog fold. Asp1518 functions as the Proton donor; for dehydratase activity in the catalytic mechanism. Disordered regions lie at residues 1621 to 1648 (PPAPRVEKKRDAGRGTLPSSSSLQEKTT) and 1686 to 1718 (LDYSLLTPRTSPNSDERIEKTDSDSGFEEADGA). Over residues 1699 to 1708 (SDERIEKTDS) the composition is skewed to basic and acidic residues. The 75-residue stretch at 1716–1790 (DGANDVTSRA…TIGDLKKLLS (75 aa)) folds into the Carrier domain. Ser1753 carries the post-translational modification O-(pantetheine 4'-phosphoryl)serine.

It catalyses the reaction 6 malonyl-CoA + acetyl-CoA + 4 H(+) = 2-(2,4-dihydroxy-6-oxidobenzoyl)-5-hydroxy-3-methylbenzenolate + 6 CO2 + 7 CoA + H2O. Its pathway is secondary metabolite biosynthesis; terpenoid biosynthesis. In terms of biological role, norlichexanthone synthase; part of the gene cluster that mediates the biosynthesis of griseofulvin, an important antifungal drug that has been in use for a long time for treating dermatophyte infections. The first step of the pathway is the formation of the heptaketide backbone by gsfA which is initiated by priming with acetyl-CoA, followed by sequential condensations of 6 malonyl-CoA units. The resulting benzophenone can undergo a spontaneous dehydration to form norlichexanthone. However, the true precursor for the griseofulvin biosynthesis is not norlichexanthone, but the heptaketide benzophenone that is O-methylated at 3-OH by gsfB to produce griseophenone D which is further methylated at 9-OH by gsfC to yield griseophenone C. Griseophenone C is then substrate of halogenase gsfI which is responsible for the regio-specific chlorination at the C13 position to form griseophenone B. The cytochrome P450 gsfF catalyzes the coupling of orcinol and phloroglucinol rings in griseophenone B to form desmethyl-dehydrogriseofulvin A which is further methylated at 5-OH by gsfD to yield dehydrogriseofulvin. Finally, gsfE performs stereospecific reduction of enone 18 of dehydrogriseofulvin to afford the final product griseofulvin. This is Non-reducing polyketide synthase gsfA from Penicillium aethiopicum.